A 290-amino-acid chain; its full sequence is ATP synthase gamma chain (290 aa).

This sequence belongs to the ATPase gamma chain family. In terms of assembly, F-type ATPases have 2 components, CF(1) - the catalytic core - and CF(0) - the membrane proton channel. CF(1) has five subunits: alpha(3), beta(3), gamma(1), delta(1), epsilon(1). CF(0) has three main subunits: a, b and c.

It is found in the cell inner membrane. Produces ATP from ADP in the presence of a proton gradient across the membrane. The gamma chain is believed to be important in regulating ATPase activity and the flow of protons through the CF(0) complex. The sequence is that of ATP synthase gamma chain from Anaeromyxobacter sp. (strain Fw109-5).